Reading from the N-terminus, the 243-residue chain is Small ribosomal subunit protein uS3 (243 aa).

A KH type-2 domain is found at I39 to E110. Residues Q216–S243 form a disordered region. A compositionally biased stretch (basic and acidic residues) spans Q233–S243.

It belongs to the universal ribosomal protein uS3 family. As to quaternary structure, part of the 30S ribosomal subunit. Forms a tight complex with proteins S10 and S14.

Functionally, binds the lower part of the 30S subunit head. Binds mRNA in the 70S ribosome, positioning it for translation. The sequence is that of Small ribosomal subunit protein uS3 from Prochlorococcus marinus (strain MIT 9215).